A 401-amino-acid polypeptide reads, in one-letter code: Glyceraldehyde-3-phosphate dehydrogenase A, chloroplastic (401 aa).

Residues 1 to 65 (MASNMLSIAN…RSSQNGVVEA (65 aa)) constitute a chloroplast transit peptide. Residues 76 to 77 (RI), Asp100, and Arg145 contribute to the NADP(+) site. D-glyceraldehyde 3-phosphate is bound by residues 217-219 (SCT), Thr248, Arg263, 276-277 (TG), and Arg299. The active-site Nucleophile is the Cys218. Asn381 provides a ligand contact to NADP(+).

Belongs to the glyceraldehyde-3-phosphate dehydrogenase family. Tetramer of either four A chains (GAPDH 2) or two A and two B chains (GAPDH 1).

It localises to the plastid. It is found in the chloroplast. The enzyme catalyses D-glyceraldehyde 3-phosphate + phosphate + NADP(+) = (2R)-3-phospho-glyceroyl phosphate + NADPH + H(+). Its pathway is carbohydrate biosynthesis; Calvin cycle. This chain is Glyceraldehyde-3-phosphate dehydrogenase A, chloroplastic (GAPA), found in Spinacia oleracea (Spinach).